The sequence spans 279 residues: Phosphatidylglycerol--prolipoprotein diacylglyceryl transferase (279 aa).

3 helical membrane-spanning segments follow: residues 22-42 (WYGIIIACGILLGYFIAQAAL), 52-72 (LIDIIFYSAIVGFIVARIYFV), and 89-109 (IWHGGIAIHGGLIGGLISGII). Arg137 lines the a 1,2-diacyl-sn-glycero-3-phospho-(1'-sn-glycerol) pocket. Transmembrane regions (helical) follow at residues 203 to 223 (LGETFFGYLIWYSVGRFFVEA) and 235 to 255 (IRVAQLVSVVLIMISVIFVIY).

Belongs to the Lgt family.

The protein localises to the cell membrane. The enzyme catalyses L-cysteinyl-[prolipoprotein] + a 1,2-diacyl-sn-glycero-3-phospho-(1'-sn-glycerol) = an S-1,2-diacyl-sn-glyceryl-L-cysteinyl-[prolipoprotein] + sn-glycerol 1-phosphate + H(+). It participates in protein modification; lipoprotein biosynthesis (diacylglyceryl transfer). Its function is as follows. Catalyzes the transfer of the diacylglyceryl group from phosphatidylglycerol to the sulfhydryl group of the N-terminal cysteine of a prolipoprotein, the first step in the formation of mature lipoproteins. This chain is Phosphatidylglycerol--prolipoprotein diacylglyceryl transferase, found in Staphylococcus epidermidis (strain ATCC 35984 / DSM 28319 / BCRC 17069 / CCUG 31568 / BM 3577 / RP62A).